The following is a 285-amino-acid chain: Protoheme IX farnesyltransferase (285 aa).

7 consecutive transmembrane segments (helical) span residues 16 to 36 (AKPKVVSLLDVVAIASYILAF), 40 to 60 (WYNLIPVLIGGSIAAGGSMII), 106 to 126 (LLANPLTAFFILLGSLVYVFV), 136 to 156 (WLNIVIGGFAGSAAAWAGYAA), 165 to 185 (SLLLGLLVFAWTPGHFWALAL), 217 to 237 (ILMIPFALGLMLYLNLIYVII), and 265 to 285 (YKFSAPYLAIVMIAAVISFIL).

The protein belongs to the UbiA prenyltransferase family. Protoheme IX farnesyltransferase subfamily.

Its subcellular location is the cell membrane. The enzyme catalyses heme b + (2E,6E)-farnesyl diphosphate + H2O = Fe(II)-heme o + diphosphate. It participates in porphyrin-containing compound metabolism; heme O biosynthesis; heme O from protoheme: step 1/1. Functionally, converts heme B (protoheme IX) to heme O by substitution of the vinyl group on carbon 2 of heme B porphyrin ring with a hydroxyethyl farnesyl side group. In Sulfolobus acidocaldarius (strain ATCC 33909 / DSM 639 / JCM 8929 / NBRC 15157 / NCIMB 11770), this protein is Protoheme IX farnesyltransferase.